A 118-amino-acid polypeptide reads, in one-letter code: Large ribosomal subunit protein bL19 (118 aa).

Belongs to the bacterial ribosomal protein bL19 family.

This protein is located at the 30S-50S ribosomal subunit interface and may play a role in the structure and function of the aminoacyl-tRNA binding site. The chain is Large ribosomal subunit protein bL19 from Dictyoglomus turgidum (strain DSM 6724 / Z-1310).